The following is a 132-amino-acid chain: Small ribosomal subunit protein eS6 (132 aa).

Belongs to the eukaryotic ribosomal protein eS6 family.

The sequence is that of Small ribosomal subunit protein eS6 from Methanoculleus marisnigri (strain ATCC 35101 / DSM 1498 / JR1).